Consider the following 124-residue polypeptide: CRISPR-associated endoribonuclease Cas2 4 (124 aa).

Aspartate 40 is a Mg(2+) binding site.

It belongs to the CRISPR-associated endoribonuclease Cas2 protein family. In terms of assembly, homodimer, forms a heterotetramer with a Cas1 homodimer. The cofactor is Mg(2+).

CRISPR (clustered regularly interspaced short palindromic repeat), is an adaptive immune system that provides protection against mobile genetic elements (viruses, transposable elements and conjugative plasmids). CRISPR clusters contain sequences complementary to antecedent mobile elements and target invading nucleic acids. CRISPR clusters are transcribed and processed into CRISPR RNA (crRNA). Functions as a ssRNA-specific endoribonuclease. Involved in the integration of spacer DNA into the CRISPR cassette. This is CRISPR-associated endoribonuclease Cas2 4 from Rhodospirillum rubrum (strain ATCC 11170 / ATH 1.1.1 / DSM 467 / LMG 4362 / NCIMB 8255 / S1).